The primary structure comprises 862 residues: Protein argonaute-2 (862 aa).

In terms of domain architecture, PAZ spans 232-351 (PVIEFMCEVL…LPLEVCNIVA (120 aa)). Interaction with guide RNA stretches follow at residues 314–319 (YFKDRH) and 527–569 (GKTP…LCLK). The 302-residue stretch at 520-821 (LVVVILPGKT…VAFRARYHLV (302 aa)) folds into the Piwi domain. Positions 590–593 (FQQP) are interaction with GW182 family members. Residue Asp600 participates in a divalent metal cation binding. Positions 653–663 (LIQFYKSTRFK) are interaction with GW182 family members. Asp672 lines the a divalent metal cation pocket. Interaction with guide RNA regions lie at residues 712 to 713 (KR), 756 to 764 (HAGIQGTSR), and 793 to 815 (YVRC…VAFR). His810 contributes to the a divalent metal cation binding site. Residues 825–847 (HDSAEGSHTSGQSNGRDQQALAK) form a disordered region. Residues 830–841 (GSHTSGQSNGRD) show a composition bias toward polar residues.

It belongs to the argonaute family. Ago subfamily. Component of the RISC loading complex (RLC), or micro-RNA (miRNA) loading complex (miRLC), which is composed of dicer1, ago2 and tarbp2. Note that the trimeric RLC/miRLC is also referred to as RISC. Mg(2+) is required as a cofactor. It depends on Mn(2+) as a cofactor.

Its subcellular location is the cytoplasm. The protein localises to the P-body. The enzyme catalyses Endonucleolytic cleavage to 5'-phosphomonoester.. In terms of biological role, required for RNA-mediated gene silencing (RNAi) by the RNA-induced silencing complex (RISC). The 'minimal RISC' appears to include ago2 bound to a short guide RNA such as a microRNA (miRNA) or short interfering RNA (siRNA). These guide RNAs direct RISC to complementary mRNAs that are targets for RISC-mediated gene silencing. The precise mechanism of gene silencing depends on the degree of complementarity between the miRNA or siRNA and its target. Binding of RISC to a perfectly complementary mRNA generally results in silencing due to endonucleolytic cleavage of the mRNA specifically by ago2. Binding of RISC to a partially complementary mRNA results in silencing through inhibition of translation, and this is independent of endonuclease activity. The inhibition of translational initiation leads to the accumulation of the affected mRNA in cytoplasmic processing bodies (P-bodies), where mRNA degradation may subsequently occur. This is Protein argonaute-2 (ago2) from Xenopus laevis (African clawed frog).